Reading from the N-terminus, the 380-residue chain is Endo-chitosanase C (380 aa).

A signal peptide spans 1-22 (MPIKSFASRLALSLAICGTAMG). An R3-1 repeat occupies 276–304 (CSWPGHCAGATCSSNDDCSDDLTCQNGKC). The stretch at 311 to 341 (ETCSWEGHCKGATCSSNDDCSDELACISGIC) is one R3-2 repeat. Residues 348–378 (ETCEWEGHCEGASCSSHDDCDGNLACKNGKC) form an R3-3 repeat.

This sequence belongs to the glycosyl hydrolase 75 family.

The protein resides in the secreted. The catalysed reaction is Endohydrolysis of beta-(1-&gt;4)-linkages between D-glucosamine residues in a partly acetylated chitosan.. Chitosanase catalyzing the endo-type cleavage of chitosan, the deacylated form of chitin. Chitosanase may be crucial in the degradation of the deacetylated portion of chitin in the fungal cell wall. Chitoolisaccharides produced by the hydrolysis of partially N-acetylated chitosan are known to have many biological activities, including antibacterial activity, immune-enhancing effects, and elicitor activity. The polypeptide is Endo-chitosanase C (csnC) (Aspergillus oryzae (Yellow koji mold)).